Consider the following 197-residue polypeptide: Imidazoleglycerol-phosphate dehydratase (197 aa).

This sequence belongs to the imidazoleglycerol-phosphate dehydratase family.

Its subcellular location is the cytoplasm. It carries out the reaction D-erythro-1-(imidazol-4-yl)glycerol 3-phosphate = 3-(imidazol-4-yl)-2-oxopropyl phosphate + H2O. Its pathway is amino-acid biosynthesis; L-histidine biosynthesis; L-histidine from 5-phospho-alpha-D-ribose 1-diphosphate: step 6/9. The sequence is that of Imidazoleglycerol-phosphate dehydratase from Teredinibacter turnerae (strain ATCC 39867 / T7901).